Reading from the N-terminus, the 108-residue chain is Parvalbumin beta 2 (108 aa).

Alanine 1 carries the post-translational modification N-acetylalanine. EF-hand domains lie at 38 to 73 (KSAADIKKVFGIIDQDKSDFVEEDELKLFLQNFSAG) and 77 to 108 (LTDAETATFLKAGDSDGDGKIGVDEFAAMVKG). Residues aspartate 51, aspartate 53, serine 55, phenylalanine 57, glutamate 59, glutamate 62, aspartate 90, aspartate 92, aspartate 94, lysine 96, and glutamate 101 each contribute to the Ca(2+) site.

This sequence belongs to the parvalbumin family.

In terms of biological role, in muscle, parvalbumin is thought to be involved in relaxation after contraction. It binds two calcium ions. The protein is Parvalbumin beta 2 of Merluccius bilinearis (Silver hake).